Reading from the N-terminus, the 316-residue chain is Beta-ketoacyl-[acyl-carrier-protein] synthase III (316 aa).

Catalysis depends on residues C112 and H243. The tract at residues 244–248 (QANLR) is ACP-binding. N273 is an active-site residue.

The protein belongs to the thiolase-like superfamily. FabH family. In terms of assembly, homodimer.

The protein resides in the cytoplasm. It catalyses the reaction malonyl-[ACP] + acetyl-CoA + H(+) = 3-oxobutanoyl-[ACP] + CO2 + CoA. The protein operates within lipid metabolism; fatty acid biosynthesis. Catalyzes the condensation reaction of fatty acid synthesis by the addition to an acyl acceptor of two carbons from malonyl-ACP. Catalyzes the first condensation reaction which initiates fatty acid synthesis and may therefore play a role in governing the total rate of fatty acid production. Possesses both acetoacetyl-ACP synthase and acetyl transacylase activities. Its substrate specificity determines the biosynthesis of branched-chain and/or straight-chain of fatty acids. The polypeptide is Beta-ketoacyl-[acyl-carrier-protein] synthase III (Actinobacillus succinogenes (strain ATCC 55618 / DSM 22257 / CCUG 43843 / 130Z)).